The chain runs to 157 residues: Small ribosomal subunit protein uS7 (157 aa).

Belongs to the universal ribosomal protein uS7 family. As to quaternary structure, part of the 30S ribosomal subunit. Contacts proteins S9 and S11.

Functionally, one of the primary rRNA binding proteins, it binds directly to 16S rRNA where it nucleates assembly of the head domain of the 30S subunit. Is located at the subunit interface close to the decoding center, probably blocks exit of the E-site tRNA. This is Small ribosomal subunit protein uS7 from Paracidovorax citrulli (strain AAC00-1) (Acidovorax citrulli).